We begin with the raw amino-acid sequence, 437 residues long: Glycogen synthase (437 aa).

An ADP-alpha-D-glucose-binding site is contributed by K15.

This sequence belongs to the glycosyltransferase 1 family. Bacterial/plant glycogen synthase subfamily.

It carries out the reaction [(1-&gt;4)-alpha-D-glucosyl](n) + ADP-alpha-D-glucose = [(1-&gt;4)-alpha-D-glucosyl](n+1) + ADP + H(+). Its pathway is glycan biosynthesis; glycogen biosynthesis. Synthesizes alpha-1,4-glucan chains using ADP-glucose. The sequence is that of Glycogen synthase from Thermus thermophilus (strain ATCC BAA-163 / DSM 7039 / HB27).